The following is a 242-amino-acid chain: Small ribosomal subunit protein uS2 (242 aa).

It belongs to the universal ribosomal protein uS2 family.

The sequence is that of Small ribosomal subunit protein uS2 from Pseudoalteromonas translucida (strain TAC 125).